Here is a 745-residue protein sequence, read N- to C-terminus: Junction plakoglobin (745 aa).

An N-acetylmethionine modification is found at M1. O-linked (GlcNAc) threonine glycosylation occurs at T14. Phosphoserine occurs at positions 99 and 125. ARM repeat units follow at residues 132–171 (NYQDDAELATRALPELTKLLNDEDPVVVTKAAMIVNQLSK), 172–215 (KEAS…LSHH), 216–255 (REGLLAIFKSGGIPALVRMLSSPVESVLFYAITTLHNLLL), 258–297 (EGAKMAVRLADGLQKMVPLLNKNNPKFLAITTDCLQLLAY), 298–341 (GNQE…LSVC), 342–381 (PSNKPAIVEAGGMQALGKHLTSNSPRLVQNCLWTLRNLSD), 383–420 (ATKQEGLESVLKILVNQLSVDDVNVLTCATGTLSNLTC), 423–464 (SKNK…HLTS), 470–510 (EMAQ…NLAL), 512–551 (PANHAPLQEAAVIPRLVQLLVKAHQDAQRHVAAGTQQPYT), 574–613 (PMNRMEIFRLNTIPLFVQLLYSSVENIQRVAAGVLCELAQ), and 615–661 (KEAA…PDYR). The interval 132-297 (NYQDDAELAT…TTDCLQLLAY (166 aa)) is interaction with DSC1 and DSG1. S182 is subject to Phosphoserine. The segment at 574-661 (PMNRMEIFRL…ISEDKNPDYR (88 aa)) is interaction with DSC1. Residues S665 and S730 each carry the phosphoserine modification.

Belongs to the beta-catenin family. Homodimer. Component of an E-cadherin/catenin adhesion complex composed of at least E-cadherin/CDH1 and gamma-catenin/JUP, and possibly alpha-catenin/CTNNA1; the complex is located to adherens junctions. The stable association of CTNNA1 is controversial as CTNNA1 was shown not to bind to F-actin when assembled in the complex. Interacts with MUC1. Interacts with CAV1. Interacts with PTPRJ. Interacts with DSG1. Interacts with DSC1 and DSC2. Interacts with PKP2. Interacts with PKP3 (via N-terminus); the interaction is required for PKP3 localization to desmosome cell-cell junctions. Interacts with DSG4. Post-translationally, may be phosphorylated by FER. As to expression, expressed in the heart (at protein level).

Its subcellular location is the cell junction. It localises to the adherens junction. The protein localises to the desmosome. It is found in the cytoplasm. The protein resides in the cytoskeleton. Its subcellular location is the cell membrane. It localises to the nucleus. Common junctional plaque protein. The membrane-associated plaques are architectural elements in an important strategic position to influence the arrangement and function of both the cytoskeleton and the cells within the tissue. The presence of plakoglobin in both the desmosomes and in the intermediate junctions suggests that it plays a central role in the structure and function of submembranous plaques. Acts as a substrate for VE-PTP and is required by it to stimulate VE-cadherin function in endothelial cells. Can replace beta-catenin in E-cadherin/catenin adhesion complexes which are proposed to couple cadherins to the actin cytoskeleton. This Homo sapiens (Human) protein is Junction plakoglobin.